A 250-amino-acid chain; its full sequence is Cysteine proteinase inhibitor 12 (250 aa).

The N-terminal stretch at 1–32 is a signal peptide; that stretch reads MRVAATTRPASSSAAAPLPLFLLLAVAAAAAA. Cystatin domains follow at residues 49-137 and 156-202; these read GGAH…RNTG and PGWR…AEVV. Residues 93–97 carry the Secondary area of contact motif; it reads QVVAG.

It belongs to the cystatin family. Phytocystatin subfamily.

Its subcellular location is the secreted. Functionally, specific inhibitor of cysteine proteinases. Probably involved in the regulation of endogenous processes and in defense against pests and pathogens. This chain is Cysteine proteinase inhibitor 12, found in Oryza sativa subsp. japonica (Rice).